A 183-amino-acid polypeptide reads, in one-letter code: Small ribosomal subunit protein uS4c (183 aa).

One can recognise an S4 RNA-binding domain in the interval 82-143 (MRLDNILFRL…KQRSKALIQN (62 aa)).

Belongs to the universal ribosomal protein uS4 family. As to quaternary structure, part of the 30S ribosomal subunit. Contacts protein S5. The interaction surface between S4 and S5 is involved in control of translational fidelity.

The protein localises to the plastid. Its subcellular location is the chloroplast. Functionally, one of the primary rRNA binding proteins, it binds directly to 16S rRNA where it nucleates assembly of the body of the 30S subunit. Its function is as follows. With S5 and S12 plays an important role in translational accuracy. In Gladiolus communis (Cornflag), this protein is Small ribosomal subunit protein uS4c (rps4).